The primary structure comprises 1103 residues: Retinal guanylyl cyclase 1 (1103 aa).

The N-terminal stretch at 1–51 (MTACARRAGGLPDPGLCGPAWWAPSLPRLPRALPRLPLLLLLLLLQPPALS) is a signal peptide. The Extracellular segment spans residues 52 to 462 (AVFTVGVLGP…PNNICGGGLE (411 aa)). Asn-297 is a glycosylation site (N-linked (GlcNAc...) asparagine). A helical membrane pass occupies residues 463–487 (PGLVFLGFLLVVGMGLAGAFLAHYV). Residues 488-1103 (RHRLLHMQMV…LEKARPGQFS (616 aa)) are Cytoplasmic-facing. The 284-residue stretch at 525-808 (QGSRSSLGAR…DHTFDLFKNI (284 aa)) folds into the Protein kinase domain. In terms of domain architecture, Guanylate cyclase spans 880–1010 (TLYFSDIVGF…DTVNTASRME (131 aa)). Residues 1065 to 1103 (PIPKPPDLQPGSSNHGISLQEIPPERRRKLEKARPGQFS) form a disordered region.

This sequence belongs to the adenylyl cyclase class-4/guanylyl cyclase family. Homodimer; requires homodimerization for guanylyl cyclase activity. Interacts with RD3; promotes the exit of GUCY2D from the endoplasmic reticulum and its trafficking to the photoreceptor outer segments. Interaction with RD3 negatively regulates guanylate cyclase activity. As to expression, retina.

The protein localises to the photoreceptor outer segment membrane. It localises to the endoplasmic reticulum membrane. It carries out the reaction GTP = 3',5'-cyclic GMP + diphosphate. Its activity is regulated as follows. Activated by GUCA1A when free calcium ions concentration is low, and inhibited by GUCA1A when free calcium ions concentration is high. Negatively regulated by RD3; inhibits the basal and GUCA1A-stimulated guanylate cyclase activity. In terms of biological role, catalyzes the synthesis of cyclic GMP (cGMP) in rods and cones of photoreceptors. Plays an essential role in phototransduction, by mediating cGMP replenishment. May also participate in the trafficking of membrane-asociated proteins to the photoreceptor outer segment membrane. The protein is Retinal guanylyl cyclase 1 (GUCY2D) of Homo sapiens (Human).